Consider the following 492-residue polypeptide: Probable G-protein coupled receptor Mth-like 8 (492 aa).

An N-terminal signal peptide occupies residues 1 to 21 (MAQFCILGVLLILSGTHCSWG). At 22–218 (FHEETHYPCA…FVLGVREWTY (197 aa)) the chain is on the extracellular side. 4 disulfide bridges follow: Cys-30–Cys-82, Cys-84–Cys-89, Cys-93–Cys-184, and Cys-94–Cys-107. 2 N-linked (GlcNAc...) asparagine glycosylation sites follow: Asn-37 and Asn-51. N-linked (GlcNAc...) asparagine glycans are attached at residues Asn-129, Asn-169, and Asn-192. Residues 219 to 239 (AICLLIAILSMFIVLMVYLMC) form a helical membrane-spanning segment. Topologically, residues 240-245 (SEMRNS) are cytoplasmic. The chain crosses the membrane as a helical span at residues 246 to 266 (FYGVAIKAYAICMILGYALLA). The Extracellular segment spans residues 267–282 (YLTLHNPANLSNAACR). N-linked (GlcNAc...) asparagine glycosylation is present at Asn-275. The helical transmembrane segment at 283-303 (ILPSLALMNLVLSFYILSFIA) threads the bilayer. The Cytoplasmic segment spans residues 304–317 (FKLYLSFYGVVFTK). Residues 318–338 (LMFWLIFTPIVLVAVGWSFFV) form a helical membrane-spanning segment. The Extracellular portion of the chain corresponds to 339–362 (GFSYYGSRLIFGGDTCWFDPRNWS). Asn-360 is a glycosylation site (N-linked (GlcNAc...) asparagine). A helical transmembrane segment spans residues 363-383 (VMIYFYAPVFVACAISGFFYV). The Cytoplasmic portion of the chain corresponds to 384–411 (LSQIYIRDQPDIETEKSFESIEKNRFKS). Residues 412-432 (FWKYFGYTAVVWVVCICSFAF) form a helical membrane-spanning segment. Residues 433-441 (NYYWENRSH) lie on the Extracellular side of the membrane. An N-linked (GlcNAc...) asparagine glycan is attached at Asn-438. A helical transmembrane segment spans residues 442 to 462 (LNYAVSFCMAFHGFAALYALI). Residues 463–492 (GKNQQIQNFLRRIDNGEDTCENSVPLSSFG) lie on the Cytoplasmic side of the membrane.

The protein belongs to the G-protein coupled receptor 2 family. Mth subfamily.

The protein resides in the cell membrane. The sequence is that of Probable G-protein coupled receptor Mth-like 8 (mthl8) from Drosophila melanogaster (Fruit fly).